The primary structure comprises 144 residues: Mediator of RNA polymerase II transcription subunit 10 (144 aa).

The protein belongs to the Mediator complex subunit 10 family. As to quaternary structure, component of the Mediator complex.

The protein resides in the cytoplasm. It is found in the nucleus. Its subcellular location is the nucleus envelope. Component of the Mediator complex, a coactivator involved in the regulated transcription of nearly all RNA polymerase II-dependent genes. Mediator functions as a bridge to convey information from gene-specific regulatory proteins to the basal RNA polymerase II transcription machinery. Mediator is recruited to promoters by direct interactions with regulatory proteins and serves as a scaffold for the assembly of a functional preinitiation complex with RNA polymerase II and the general transcription factors. The sequence is that of Mediator of RNA polymerase II transcription subunit 10 (med10) from Schizosaccharomyces pombe (strain 972 / ATCC 24843) (Fission yeast).